We begin with the raw amino-acid sequence, 152 residues long: Small ribosomal subunit protein uS13 (152 aa).

At serine 41 the chain carries Phosphoserine.

The protein belongs to the universal ribosomal protein uS13 family.

The protein resides in the cytoplasm. Its function is as follows. Located at the top of the head of the 40S subunit, it contacts several helices of the 18S rRNA. This is Small ribosomal subunit protein uS13 (RpS18) from Drosophila melanogaster (Fruit fly).